We begin with the raw amino-acid sequence, 124 residues long: Nascent polypeptide-associated complex protein (124 aa).

The NAC-A/B domain maps to 7–74; the sequence is GLNPRKMKQM…PESRERGDSG (68 aa). The interval 53-124 is disordered; it reads AQGQQTYQVV…DLAAAVQKLE (72 aa). Residues 74 to 93 show a composition bias toward acidic residues; the sequence is GSEDDSETESGGEFSEDDVE.

This sequence belongs to the NAC-alpha family. Homodimer. Interacts with the ribosome. Binds ribosomal RNA.

Functionally, contacts the emerging nascent chain on the ribosome. The chain is Nascent polypeptide-associated complex protein from Natronomonas pharaonis (strain ATCC 35678 / DSM 2160 / CIP 103997 / JCM 8858 / NBRC 14720 / NCIMB 2260 / Gabara) (Halobacterium pharaonis).